Here is a 396-residue protein sequence, read N- to C-terminus: Elongation factor Tu 2 (396 aa).

The 197-residue stretch at 10-206 (KPHVNIGTIG…AVDSYIPTPQ (197 aa)) folds into the tr-type G domain. Positions 19 to 26 (GHVDHGKT) are G1. 19 to 26 (GHVDHGKT) lines the GTP pocket. Position 26 (threonine 26) interacts with Mg(2+). A G2 region spans residues 60–64 (GITIS). Residues 81 to 84 (DCPG) are G3. Residues 81–85 (DCPGH) and 136–139 (NKVD) each bind GTP. The interval 136-139 (NKVD) is G4. Residues 174-176 (SAL) are G5.

It belongs to the TRAFAC class translation factor GTPase superfamily. Classic translation factor GTPase family. EF-Tu/EF-1A subfamily. Monomer.

Its subcellular location is the cytoplasm. It carries out the reaction GTP + H2O = GDP + phosphate + H(+). GTP hydrolase that promotes the GTP-dependent binding of aminoacyl-tRNA to the A-site of ribosomes during protein biosynthesis. This Myxococcus xanthus (strain DK1622) protein is Elongation factor Tu 2.